A 717-amino-acid chain; its full sequence is Transport/processing ATP-binding protein ComA (717 aa).

The Peptidase C39 domain occupies 11 to 138; it reads QVDQMDCGVA…EEWTGVTLFM (128 aa). C17 is an active-site residue. A run of 7 helical transmembrane segments spans residues 18–38, 166–186, 205–225, 237–257, 281–301, 306–326, and 397–417; these read GVASLAMVFGYYGSYYFLAHL, GLIANIVLATLLVTVINIVGS, LGIISIGLVIVYILQQILSYA, LSIDVILSYIKHVFHLPMSFF, STILSIFLDVSTVVIISLVLF, NLFFMTLLALPIYTVIIFAFM, and VAHLLLNVGILWMGAVLVMDG. One can recognise an ABC transmembrane type-1 domain in the interval 168–450; that stretch reads IANIVLATLL…IINLQTKLQT (283 aa). An ABC transporter domain is found at 484–717; sequence MTFKQVHYKY…GGFYAHLVNS (234 aa). 517-524 contacts ATP; sequence GISGSGKT.

It belongs to the ABC transporter superfamily. HlyB family.

It is found in the cell membrane. Required for induction of competence. Seems to transport the competence-stimulating peptide (CSP). This Streptococcus pneumoniae (strain ATCC BAA-255 / R6) protein is Transport/processing ATP-binding protein ComA (comA).